The sequence spans 130 residues: Small ribosomal subunit protein eS8 (130 aa).

The protein belongs to the eukaryotic ribosomal protein eS8 family. As to quaternary structure, part of the 30S ribosomal subunit.

The sequence is that of Small ribosomal subunit protein eS8 from Ignicoccus hospitalis (strain KIN4/I / DSM 18386 / JCM 14125).